A 323-amino-acid polypeptide reads, in one-letter code: AA9 family lytic polysaccharide monooxygenase B (323 aa).

The signal sequence occupies residues 1–18 (MKSFTLTTLAALAGNAAA). The Cu(2+) site is built by histidine 19 and histidine 97. Residues cysteine 56 and cysteine 191 are joined by a disulfide bond. Residues histidine 177 and glutamine 186 each contribute to the O2 site. Tyrosine 188 is a Cu(2+) binding site. The CBM1 domain maps to 286 to 323 (CTVQKYQQCGGQGYTGCTNCASGSTCSAVSPPYYSQCV).

Belongs to the polysaccharide monooxygenase AA9 family. The cofactor is Cu(2+).

It localises to the secreted. It carries out the reaction [(1-&gt;4)-beta-D-glucosyl]n+m + reduced acceptor + O2 = 4-dehydro-beta-D-glucosyl-[(1-&gt;4)-beta-D-glucosyl]n-1 + [(1-&gt;4)-beta-D-glucosyl]m + acceptor + H2O.. Its activity is regulated as follows. Is able to utilize various natural phenolic compounds as reducing agents. Most of these reducing agents are present in plants, either free or as lignin building blocks, such as sinapic acid, or as flavonoids such as catechin and dopamine. Phenolic compounds with 1,2-benzenediol and 1,2,3-benzenetriol moieties yield the highest release of oxidized and non-oxidized glucooligosaccharides from cellulose compared to monophenols or sulfur-containing compounds. Lytic polysaccharide monooxygenase (LPMO) that depolymerizes crystalline and amorphous polysaccharides via the oxidation of scissile alpha- or beta-(1-4)-glycosidic bonds, yielding C1 oxidation products. Catalysis by LPMOs requires the reduction of the active-site copper from Cu(II) to Cu(I) by a reducing agent and H(2)O(2) or O(2) as a cosubstrate. Is active on regenerated amorphous cellulose (RAC). The polypeptide is AA9 family lytic polysaccharide monooxygenase B (Thermothelomyces thermophilus (strain ATCC 42464 / BCRC 31852 / DSM 1799) (Sporotrichum thermophile)).